The sequence spans 161 residues: 4-hydroxybenzoyl-CoA reductase subunit gamma (161 aa).

Positions 3–79 (NILRLTLNGR…GKKVETVESL (77 aa)) constitute a 2Fe-2S ferredoxin-type domain. Residues Cys41, Cys46, Cys49, Cys61, Cys100, Cys103, Cys135, and Cys137 each contribute to the [2Fe-2S] cluster site.

Heterohexamer of two alpha, two beta and two gamma subunits. It depends on [2Fe-2S] cluster as a cofactor.

It catalyses the reaction oxidized 2[4Fe-4S]-[ferredoxin] + benzoyl-CoA + H2O = 4-hydroxybenzoyl-CoA + reduced 2[4Fe-4S]-[ferredoxin] + 2 H(+). Its activity is regulated as follows. Inactivated by low concentrations of cyanide in vitro. Component of a complex that catalyzes the reductive dehydroxylation of 4-hydroxybenzoyl-CoA to benzoyl-CoA. Reaction is not reversible. Is a key enzyme in the anaerobic degradation of phenolic compounds. The protein is 4-hydroxybenzoyl-CoA reductase subunit gamma (hcrC) of Thauera aromatica.